Reading from the N-terminus, the 209-residue chain is Ribosomal RNA large subunit methyltransferase E (209 aa).

Residues Gly-63, Trp-65, Asp-83, Asp-99, and Asp-124 each contribute to the S-adenosyl-L-methionine site. The Proton acceptor role is filled by Lys-164. Residues 191–209 (EASRGRSREVYIVATGYKG) enclose the TRAM domain.

Belongs to the class I-like SAM-binding methyltransferase superfamily. RNA methyltransferase RlmE family.

It is found in the cytoplasm. It carries out the reaction uridine(2552) in 23S rRNA + S-adenosyl-L-methionine = 2'-O-methyluridine(2552) in 23S rRNA + S-adenosyl-L-homocysteine + H(+). In terms of biological role, specifically methylates the uridine in position 2552 of 23S rRNA at the 2'-O position of the ribose in the fully assembled 50S ribosomal subunit. This Haemophilus influenzae (strain 86-028NP) protein is Ribosomal RNA large subunit methyltransferase E.